Here is a 232-residue protein sequence, read N- to C-terminus: tRNA (guanine-N(7)-)-methyltransferase (232 aa).

Residues Glu-63, Glu-88, Asp-115, and Asp-137 each contribute to the S-adenosyl-L-methionine site. Residue Asp-137 is part of the active site. Substrate-binding positions include Lys-141, Asp-173, and 211 to 214 (TRYE).

The protein belongs to the class I-like SAM-binding methyltransferase superfamily. TrmB family.

It catalyses the reaction guanosine(46) in tRNA + S-adenosyl-L-methionine = N(7)-methylguanosine(46) in tRNA + S-adenosyl-L-homocysteine. It functions in the pathway tRNA modification; N(7)-methylguanine-tRNA biosynthesis. Its function is as follows. Catalyzes the formation of N(7)-methylguanine at position 46 (m7G46) in tRNA. The chain is tRNA (guanine-N(7)-)-methyltransferase from Agrobacterium fabrum (strain C58 / ATCC 33970) (Agrobacterium tumefaciens (strain C58)).